A 136-amino-acid chain; its full sequence is Transport protein particle 20 kDa subunit (136 aa).

It belongs to the TRAPP small subunits family. Sedlin subfamily.

The protein localises to the cytoplasm. Its subcellular location is the golgi apparatus. It is found in the cis-Golgi network. It localises to the endoplasmic reticulum. In terms of biological role, component of the TRAPP I and TRAPP II complexes. TRAPP I plays a key role in the late stages of endoplasmic reticulum to Golgi traffic. TRAPP II seems to play a role in intra-Golgi transport. The chain is Transport protein particle 20 kDa subunit (trs20) from Schizosaccharomyces pombe (strain 972 / ATCC 24843) (Fission yeast).